Consider the following 250-residue polypeptide: Probable transcriptional regulatory protein Emin_1151 (250 aa).

It belongs to the TACO1 family.

It localises to the cytoplasm. The chain is Probable transcriptional regulatory protein Emin_1151 from Elusimicrobium minutum (strain Pei191).